A 287-amino-acid chain; its full sequence is MNKSIAPAPVVAAGDVKFGNALPLSVIAGPCQLESRAHALEVAAALQEIGKRLGIGIVYKTSFDKANRTSAASARGIGLDGALPIFAEIRDSIGLPVLTDVHEAGQCARAAEAVDILQIPAFLCRQTDLLLAAAATGRIVNVKKGQFLAPWDMGNVVAKITSAGNPKVLVTERGVSFGYNTLVSDMRALPIMAKTTGAPVIFDATHSVQQPGGKGTSSGGEREFVPVLARAAVAVGVAGVFIETHPDPDHAPSDGPNMVPLRDFESLLRTLMEFDALAKRRSGAGTI.

Belongs to the KdsA family.

Its subcellular location is the cytoplasm. The catalysed reaction is D-arabinose 5-phosphate + phosphoenolpyruvate + H2O = 3-deoxy-alpha-D-manno-2-octulosonate-8-phosphate + phosphate. It participates in carbohydrate biosynthesis; 3-deoxy-D-manno-octulosonate biosynthesis; 3-deoxy-D-manno-octulosonate from D-ribulose 5-phosphate: step 2/3. It functions in the pathway bacterial outer membrane biogenesis; lipopolysaccharide biosynthesis. The chain is 2-dehydro-3-deoxyphosphooctonate aldolase from Rhodopseudomonas palustris (strain HaA2).